The sequence spans 86 residues: F(1)-ATPase inhibitor STF1, mitochondrial (86 aa).

Residues 1–23 (MLNRCISRNTRLPVNLRIASRFY) constitute a mitochondrion transit peptide. A Phosphoserine modification is found at Ser24.

It belongs to the ATPase inhibitor family. Monomer and homodimer. Monomeric at pH 5.0 and dimeric at either pH 6.5 or 8.0. The protein aggregates increasingly strongly with increasing pH.

The protein resides in the mitochondrion. Endogenous low-affinity ATPase inhibitor, which inhibits specifically the reverse ATPase reaction of mitochondrial F(1)F(0)-type ATP synthase. Found to stabilize, together with STF2, a complex of intrinsic ATPase inhibitor INH1 and proton-translocating ATPase in mitochondrial membranes. Binds directly to purified F1-ATPase. This chain is F(1)-ATPase inhibitor STF1, mitochondrial (STF1), found in Saccharomyces cerevisiae (strain ATCC 204508 / S288c) (Baker's yeast).